Consider the following 145-residue polypeptide: Mitochondrial import receptor subunit TOM20 homolog (145 aa).

At 1–6 (MVGRNS) the chain is on the mitochondrial intermembrane side. Residues 7 to 24 (AIAAGVCGALFIGYCIYF) traverse the membrane as a helical segment. The Cytoplasmic segment spans residues 25 to 145 (DRKRRSDPNF…AQSLAEDDVE (121 aa)). Residues K35, K56, K61, and K68 each participate in a glycyl lysine isopeptide (Lys-Gly) (interchain with G-Cter in ubiquitin) cross-link. Phosphoserine is present on residues S135 and S138.

Belongs to the Tom20 family. As to quaternary structure, forms part of the preprotein translocase complex of the outer mitochondrial membrane (TOM complex) which consists of at least 7 different proteins (TOMM5, TOMM6, TOMM7, TOMM20, TOMM22, TOMM40 and TOMM70). Interacts with TOM22. Interacts with APEX1. Interacts with TBC1D21. Upon mitochondrial depolarization, interacts with PINK1; the interaction is required for PINK1-TOM-TIM23 supercomplex formation which is critical for PINK1 stabilization at the outer mitochondrial membrane, kinase activation and downstream mitophagy. In terms of processing, ubiquitinated by PRKN during mitophagy, leading to its degradation and enhancement of mitophagy. Deubiquitinated by USP30. Expressed in brain, kidney, stomach, colon, jejunum, ileum, testis, ovary and oviduct (at protein level). In the brain, expressed in neural cells of the cerebrum and cerebellum (at protein level). In the kidney, expressed in the proximal to distal tubule in the cortex and the outer and inner zones of the medulla (at protein level). In the stomach, expressed in the basal layer of stratified squamous epithelia in the forestomach and in the gastric pit and fundic gland of the glandular stomach (at protein level). Expressed in epithelial cells of the jejunum, ileum, and colon (at protein level). In the testis, expressed by spermatocytes and spermatogonia (at protein level). In the ovaries, expressed by follicular epithelial cells and corpus luteum cells (at protein level). In the oviduct, expressed in the epithelia of the isthmus and the ciliated cells of the ampulla (at protein level). Expressed in the sperm midpiece (at protein level).

It is found in the mitochondrion outer membrane. Central component of the receptor complex responsible for the recognition and translocation of cytosolically synthesized mitochondrial preproteins. Together with TOM22 functions as the transit peptide receptor at the surface of the mitochondrion outer membrane and facilitates the movement of preproteins into the TOM40 translocation pore. Required for the translocation across the mitochondrial outer membrane of cytochrome P450 monooxygenases. This is Mitochondrial import receptor subunit TOM20 homolog (Tomm20) from Mus musculus (Mouse).